The primary structure comprises 308 residues: Polyprenal reductase (308 aa).

The Cytoplasmic segment spans residues Met1–Thr2. A helical transmembrane segment spans residues Leu3–Leu23. The Lumenal segment spans residues Leu24–Arg65. A helical transmembrane segment spans residues Cys66–Leu86. The Cytoplasmic segment spans residues Arg87–Ser120. The chain crosses the membrane as a helical span at residues Val121 to Phe141. Over Val142–Gly148 the chain is Lumenal. Residues Val149–Val169 form a helical membrane-spanning segment. The Cytoplasmic segment spans residues Leu170–Asn184. The chain crosses the membrane as a helical span at residues Leu185–Leu205. The Lumenal portion of the chain corresponds to His206 to Ser255. The helical transmembrane segment at Ile256–Leu276 threads the bilayer. The Cytoplasmic segment spans residues Asn277–Phe308.

The protein belongs to the steroid 5-alpha reductase family. Polyprenal reductase subfamily.

The protein resides in the endoplasmic reticulum membrane. The catalysed reaction is a di-trans,poly-cis-dolichal + NADP(+) = a di-trans,poly-cis-polyprenal + NADPH + H(+). It catalyses the reaction a 3-oxo-5alpha-steroid + NADP(+) = a 3-oxo-Delta(4)-steroid + NADPH + H(+). The enzyme catalyses androst-4-ene-3,17-dione + NADPH + H(+) = 5alpha-androstan-3,17-dione + NADP(+). It carries out the reaction 17beta-hydroxy-5alpha-androstan-3-one + NADP(+) = testosterone + NADPH + H(+). It participates in protein modification; protein glycosylation. In terms of biological role, plays a key role in early steps of protein N-linked glycosylation by being involved in the conversion of polyprenol into dolichol. Acts as a polyprenal reductase that mediates the reduction of polyprenal into dolichal in a NADP-dependent mechanism. Dolichols are required for the synthesis of dolichol-linked monosaccharides and the oligosaccharide precursor used for N-glycosylation. Also able to convert testosterone (T) into 5-alpha-dihydrotestosterone (DHT). The chain is Polyprenal reductase (srd5a3) from Xenopus tropicalis (Western clawed frog).